Reading from the N-terminus, the 313-residue chain is MANRTVKDANSVHGTNPQYLVEKIIRTRIYESKYWKEECFGLTAELVVDKAMELKFVGGVYGGNVKPTPFLCLTLKMLQIQPEKDIIVEFIKNEDFKYVRLLGAMYMRLTGTSVDCYKYLEPLYNDYRKIKSQNRNGEFELMHVDEFIDELLHAERMCDIILPRLQKRQVLEEAELLDPRISALEEDLDEVETSEEEDDEDEKPERMQSPEPHRRSYRDMDRPRRSPSPRYRRSRSPRRRSRSPKRRSPSPRRERDRDRHRSKSPRRHRSRSRERRHRSKSPGHHRSHRHRSHSKSPESRSKKSHKRSRRGNE.

The tract at residues Met1 to Pro179 is N-terminal protein interaction domain. The stretch at Glu172–Asp201 forms a coiled coil. A disordered region spans residues Ser182–Glu313. Residues Leu184–Glu202 show a composition bias toward acidic residues. Over residues Lys203 to Arg224 the composition is skewed to basic and acidic residues. Basic residues-rich tracts occupy residues Arg225 to Ser250, His260 to Ser294, and Lys302 to Glu313.

Belongs to the PRP38 family. In terms of assembly, component of the spliceosome B complex.

It localises to the nucleus. Its function is as follows. Involved in pre-mRNA splicing as a component of the spliceosome. The protein is Pre-mRNA-splicing factor 38A (prpf38a) of Danio rerio (Zebrafish).